Reading from the N-terminus, the 313-residue chain is Glutathione synthetase (313 aa).

Positions 125 to 309 (KLFVMDFTEL…IAAKIWDVIE (185 aa)) constitute an ATP-grasp domain. 151–207 (RAEHGAVVMKPLHGHGGAAVFRVLPQDINFGSLYDMFAVTFREPWVIQRFLPEVKHG) is an ATP binding site. The Mg(2+) site is built by E280 and N282.

It belongs to the prokaryotic GSH synthase family. It depends on Mg(2+) as a cofactor. Mn(2+) serves as cofactor.

It carries out the reaction gamma-L-glutamyl-L-cysteine + glycine + ATP = glutathione + ADP + phosphate + H(+). It functions in the pathway sulfur metabolism; glutathione biosynthesis; glutathione from L-cysteine and L-glutamate: step 2/2. The chain is Glutathione synthetase from Rhodopseudomonas palustris (strain ATCC BAA-98 / CGA009).